Consider the following 678-residue polypeptide: Probable metal-nicotianamine transporter YSL6 (678 aa).

The next 14 membrane-spanning stretches (helical) occupy residues V41 to H61, L65 to V85, C113 to M133, L158 to A178, I226 to F246, I279 to I299, V324 to Y344, L394 to F414, W419 to G439, G467 to A487, I512 to F532, S561 to I581, F606 to W626, and I641 to I661.

It belongs to the YSL (TC 2.A.67.2) family. Expressed in roots and leaves.

It localises to the membrane. Functionally, may be involved in the transport of nicotianamine-chelated metals. The protein is Probable metal-nicotianamine transporter YSL6 (YSL6) of Oryza sativa subsp. japonica (Rice).